A 244-amino-acid polypeptide reads, in one-letter code: Lipid A 1-phosphatase (244 aa).

A run of 6 helical transmembrane segments spans residues 28-48, 60-80, 98-118, 154-174, 178-198, and 201-221; these read LFVT…PIGA, ELLT…LLFF, ALYV…SGLL, FPSG…LLFP, VAFI…GAHY, and DVIA…IVFA.

This sequence belongs to the lipid A LpxE 1-phosphatase family.

The protein resides in the cell inner membrane. It participates in bacterial outer membrane biogenesis; LPS lipid A biosynthesis. Removes the 1-phosphate group from (tetraacyl) lipid A species, has no requirement for the Kdo(2) moiety of lipid A. Has no 4'-phosphatase activity. Reduces sensitivity of S.meliloti strain 1021 to the cationic antimicrobial peptide (CAMP) polymyxin B. This is Lipid A 1-phosphatase from Rhizobium johnstonii (strain DSM 114642 / LMG 32736 / 3841) (Rhizobium leguminosarum bv. viciae).